Consider the following 862-residue polypeptide: AP-1 complex subunit gamma-2 (862 aa).

11 HEAT repeats span residues 1–28 (MNPF…EERA), 29–65 (VVRK…LGYP), 101–136 (EVLM…CSAE), 137–173 (MARD…KVPD), 308–345 (GLRV…VDSQ), 346–382 (AVQR…ENNV), 384–417 (PLAK…KFAP), 418–454 (EKIW…NAPD), 458–496 (YTVR…NNAG), 507–545 (TESD…RFPS), and 560–599 (SFVL…ATFS). The GAE domain occupies 744–859 (AAYPSIVAFE…LEEGQINNFP (116 aa)).

The protein belongs to the adaptor complexes large subunit family. Adaptor protein complex 1 (AP-1) is a heterotetramer composed of two large adaptins (gamma-type subunit and beta-type subunit), a medium adaptin (mu-type subunit) and a small adaptin (sigma-type subunit).

The protein resides in the golgi apparatus. The protein localises to the cytoplasmic vesicle. Its subcellular location is the clathrin-coated vesicle membrane. Functionally, subunit of clathrin-associated adaptor protein complex 1 that plays a role in protein sorting at the trans-Golgi network and early endosomes (TGN/EE). The AP complexes mediate both the recruitment of clathrin to membranes and the recognition of sorting signals within the cytosolic tails of transmembrane cargo molecules. In Arabidopsis thaliana (Mouse-ear cress), this protein is AP-1 complex subunit gamma-2.